The primary structure comprises 240 residues: Cysteine-rich venom protein ablomin (240 aa).

The signal sequence occupies residues 1 to 19 (MIVFIVLPILAAVLQQSSG). One can recognise an SCP domain in the interval 38-166 (VDLHNSLRRS…EYSYFYVCQY (129 aa)). 8 disulfides stabilise this stretch: cysteine 75–cysteine 153, cysteine 92–cysteine 167, cysteine 148–cysteine 164, cysteine 186–cysteine 193, cysteine 189–cysteine 198, cysteine 202–cysteine 235, cysteine 211–cysteine 229, and cysteine 220–cysteine 233. Positions 202–235 (CTQEDVFTNCNSLVQQSNCQHNYIKTNCPASCFC) constitute a ShKT domain.

Belongs to the CRISP family. Expressed by the venom gland.

The protein resides in the secreted. Functionally, blocks contraction of smooth muscle elicited by high potassium-induced depolarization, but does not block caffeine-stimulated contraction. Since high potassium-treatment activates voltage-gated channels and caffeine exposure activates ryanodine receptors, this toxin may target L-type voltage-gated calcium channels (Cav) (and not ryanodine receptors) on smooth muscle. This toxin also shows a little inhibition on cyclic nucleotide-gated CNGA1 channel. The chain is Cysteine-rich venom protein ablomin from Gloydius blomhoffii (Mamushi).